Consider the following 90-residue polypeptide: Co-chaperonin GroES (90 aa).

The protein belongs to the GroES chaperonin family. Heptamer of 7 subunits arranged in a ring. Interacts with the chaperonin GroEL.

Its subcellular location is the cytoplasm. In terms of biological role, together with the chaperonin GroEL, plays an essential role in assisting protein folding. The GroEL-GroES system forms a nano-cage that allows encapsulation of the non-native substrate proteins and provides a physical environment optimized to promote and accelerate protein folding. GroES binds to the apical surface of the GroEL ring, thereby capping the opening of the GroEL channel. The polypeptide is Co-chaperonin GroES (Helicobacter hepaticus (strain ATCC 51449 / 3B1)).